The primary structure comprises 110 residues: uncharacterized protein (110 aa).

The tract at residues 85-110 (ARKAERPSQGGKDYNGTAKSAQSTTV) is disordered. Residues 101–110 (TAKSAQSTTV) are compositionally biased toward polar residues.

This is an uncharacterized protein from Saccharomyces cerevisiae (strain ATCC 204508 / S288c) (Baker's yeast).